The chain runs to 285 residues: MNDVVPPAAAESAAAGVSRIALGIEYKGSRYRGWQRQEAGVPSVQEALERALSKVAAEPVGVICAGRTDAAVHASGQVVHFDTAVERPLKAWVMGTNANLPADISVTWARVMPAHFHARFSAMARRYRYAIYNDPIRPAHLAEEVTWNHRPLDIGRMREAAQVLVGTHDFTSFRAVQCQAKSPVKTMHHVRLLEHGRLIVLDIRGNAFLHHMVRNIAGVLMTIGAGERPIEWAKEVLEARDRRAGGVTAHPYGLYLVRVEYPGEFELPERYLGPHFLSGLPDIVG.

Aspartate 69 (nucleophile) is an active-site residue. Tyrosine 127 is a substrate binding site.

It belongs to the tRNA pseudouridine synthase TruA family. In terms of assembly, homodimer.

The catalysed reaction is uridine(38/39/40) in tRNA = pseudouridine(38/39/40) in tRNA. Formation of pseudouridine at positions 38, 39 and 40 in the anticodon stem and loop of transfer RNAs. The protein is tRNA pseudouridine synthase A of Pseudomonas aeruginosa (strain ATCC 15692 / DSM 22644 / CIP 104116 / JCM 14847 / LMG 12228 / 1C / PRS 101 / PAO1).